Reading from the N-terminus, the 606-residue chain is Ubiquitin-like modifier-activating enzyme ATG7 (606 aa).

Positions 316–321 (GSGTLG) match the GXGXXG motif motif. Catalysis depends on C488, which acts as the Glycyl thioester intermediate. The tract at residues 567-606 (ALDDYKCVEKLSGLSKVQEEAELALEEDFDFSEDDEFVTG) is homodimerization.

It belongs to the ATG7 family. Homodimer. Interacts with ATG8 through a thioester bond between Cys-488 and the C-terminal Gly of ATG8 and with ATG12 through a thioester bond between Cys-488 and the C-terminal Gly of ATG12. Also interacts with ATG3.

Its subcellular location is the cytoplasm. The protein resides in the preautophagosomal structure. In terms of biological role, E1-like activating enzyme involved in the 2 ubiquitin-like systems required for cytoplasm to vacuole transport (Cvt) and autophagy. Activates ATG12 for its conjugation with ATG5 and ATG8 for its conjugation with phosphatidylethanolamine. Both systems are needed for the ATG8 association to Cvt vesicles and autophagosomes membranes. Autophagy is essential for maintenance of amino acid levels and protein synthesis under nitrogen starvation. Required for selective autophagic degradation of the nucleus (nucleophagy) as well as for mitophagy which contributes to regulate mitochondrial quantity and quality by eliminating the mitochondria to a basal level to fulfill cellular energy requirements and preventing excess ROS production. The polypeptide is Ubiquitin-like modifier-activating enzyme ATG7 (Kluyveromyces marxianus (strain DMKU3-1042 / BCC 29191 / NBRC 104275) (Yeast)).